The sequence spans 262 residues: Co-chaperone protein DjlA (262 aa).

Residues 1–6 (MRFWGK) are Periplasmic-facing. The chain crosses the membrane as a helical span at residues 7–30 (FFGFVIGFMFGRFFGALLGLWLGH). Residues 31–262 (LYDKRPGGGA…DRVKSERGMR (232 aa)) are Cytoplasmic-facing. The J domain maps to 196–262 (DAYHLLGITA…DRVKSERGMR (67 aa)).

Homodimer.

It localises to the cell inner membrane. In terms of biological role, regulatory DnaK co-chaperone. Direct interaction between DnaK and DjlA is needed for the induction of the wcaABCDE operon, involved in the synthesis of a colanic acid polysaccharide capsule, possibly through activation of the RcsB/RcsC phosphotransfer signaling pathway. The colanic acid capsule may help the bacterium survive conditions outside the host. The chain is Co-chaperone protein DjlA from Shewanella oneidensis (strain ATCC 700550 / JCM 31522 / CIP 106686 / LMG 19005 / NCIMB 14063 / MR-1).